A 203-amino-acid polypeptide reads, in one-letter code: Protein-methionine-sulfoxide reductase heme-binding subunit MsrQ (203 aa).

The next 5 membrane-spanning stretches (helical) occupy residues 13–33 (IAIW…INLG), 79–99 (LLGL…SILE), 116–136 (PYLT…LTST), 147–167 (WQKL…HYLW), and 169–189 (VKTL…LLLL).

The protein belongs to the MsrQ family. In terms of assembly, heterodimer of a catalytic subunit (MsrP) and a heme-binding subunit (MsrQ). FMN is required as a cofactor. Heme b serves as cofactor.

It localises to the cell inner membrane. Functionally, part of the MsrPQ system that repairs oxidized periplasmic proteins containing methionine sulfoxide residues (Met-O), using respiratory chain electrons. Thus protects these proteins from oxidative-stress damage caused by reactive species of oxygen and chlorine generated by the host defense mechanisms. MsrPQ is essential for the maintenance of envelope integrity under bleach stress, rescuing a wide series of structurally unrelated periplasmic proteins from methionine oxidation. MsrQ provides electrons for reduction to the reductase catalytic subunit MsrP, using the quinone pool of the respiratory chain. This is Protein-methionine-sulfoxide reductase heme-binding subunit MsrQ from Yersinia pseudotuberculosis serotype O:1b (strain IP 31758).